The primary structure comprises 347 residues: Adenine deaminase (347 aa).

Zn(2+)-binding residues include His-16, His-18, and His-204. Glu-207 serves as the catalytic Proton donor. Zn(2+) is bound at residue Asp-285. Asp-286 contributes to the substrate binding site.

Belongs to the metallo-dependent hydrolases superfamily. Adenosine and AMP deaminases family. Adenine deaminase type 2 subfamily. Requires Zn(2+) as cofactor. Probably ubiquitinated when cells enter quiescence in response to nutrient limitation, since it is specifically degraded via a process requiring the F-box protein SAF1 and components of the SKP1-Cullin-F-box complex.

It is found in the cytoplasm. It localises to the nucleus. The catalysed reaction is adenine + H2O + H(+) = hypoxanthine + NH4(+). In terms of biological role, catalyzes the hydrolytic deamination of adenine to hypoxanthine. Plays an important role in the purine salvage pathway and in nitrogen catabolism. Also exhibits a low activity towards N(6)-substituted adenines that are commonly known as the plant hormones cytokinins. This Saccharomyces cerevisiae (strain ATCC 204508 / S288c) (Baker's yeast) protein is Adenine deaminase.